The following is a 180-amino-acid chain: Large ribosomal subunit protein uL5 (180 aa).

It belongs to the universal ribosomal protein uL5 family. As to quaternary structure, part of the 50S ribosomal subunit; part of the 5S rRNA/L5/L18/L25 subcomplex. Contacts the 5S rRNA and the P site tRNA. Forms a bridge to the 30S subunit in the 70S ribosome.

Its function is as follows. This is one of the proteins that bind and probably mediate the attachment of the 5S RNA into the large ribosomal subunit, where it forms part of the central protuberance. In the 70S ribosome it contacts protein S13 of the 30S subunit (bridge B1b), connecting the 2 subunits; this bridge is implicated in subunit movement. Contacts the P site tRNA; the 5S rRNA and some of its associated proteins might help stabilize positioning of ribosome-bound tRNAs. The sequence is that of Large ribosomal subunit protein uL5 from Mesoplasma florum (strain ATCC 33453 / NBRC 100688 / NCTC 11704 / L1) (Acholeplasma florum).